The sequence spans 298 residues: Lipoyl synthase (298 aa).

Residues cysteine 40, cysteine 45, cysteine 51, cysteine 67, cysteine 71, cysteine 74, and serine 280 each contribute to the [4Fe-4S] cluster site. The region spanning 53–269 (AVRKTATFMI…KEIALSKGFS (217 aa)) is the Radical SAM core domain.

It belongs to the radical SAM superfamily. Lipoyl synthase family. [4Fe-4S] cluster is required as a cofactor.

The protein resides in the cytoplasm. The catalysed reaction is [[Fe-S] cluster scaffold protein carrying a second [4Fe-4S](2+) cluster] + N(6)-octanoyl-L-lysyl-[protein] + 2 oxidized [2Fe-2S]-[ferredoxin] + 2 S-adenosyl-L-methionine + 4 H(+) = [[Fe-S] cluster scaffold protein] + N(6)-[(R)-dihydrolipoyl]-L-lysyl-[protein] + 4 Fe(3+) + 2 hydrogen sulfide + 2 5'-deoxyadenosine + 2 L-methionine + 2 reduced [2Fe-2S]-[ferredoxin]. It functions in the pathway protein modification; protein lipoylation via endogenous pathway; protein N(6)-(lipoyl)lysine from octanoyl-[acyl-carrier-protein]. Catalyzes the radical-mediated insertion of two sulfur atoms into the C-6 and C-8 positions of the octanoyl moiety bound to the lipoyl domains of lipoate-dependent enzymes, thereby converting the octanoylated domains into lipoylated derivatives. This is Lipoyl synthase from Bacillus cytotoxicus (strain DSM 22905 / CIP 110041 / 391-98 / NVH 391-98).